Here is a 130-residue protein sequence, read N- to C-terminus: Protein ApaG (130 aa).

The ApaG domain maps to serine 3–arginine 127.

This is Protein ApaG from Parvibaculum lavamentivorans (strain DS-1 / DSM 13023 / NCIMB 13966).